A 235-amino-acid chain; its full sequence is Zorya protein ZorB (235 aa).

A helical membrane pass occupies residues leucine 25–valine 44. Positions glutamine 87–alanine 225 constitute an OmpA-like domain.

This sequence belongs to the MotB family.

The protein localises to the cell inner membrane. In terms of biological role, component of antiviral defense system Zorya type II, composed of ZorA, ZorB and ZorE. Expression of Zorya type II in E.coli (strain MG1655) confers resistance to phages SECphi7 and T7. While most T7 infected Zorya-containing cells undergo abortive infection, a minority produce viable phage progeny. These eventually accumulate to a high multiplicity of infection, leading to culture collapse by 170 minutes after initial infection. ZorA and ZorB probably assemble in the cell inner membrane and exert their effect there. This chain is Zorya protein ZorB, found in Escherichia coli (strain ATCC 8739 / DSM 1576 / NBRC 3972 / NCIMB 8545 / WDCM 00012 / Crooks).